We begin with the raw amino-acid sequence, 303 residues long: Ribosomal RNA small subunit methyltransferase H (303 aa).

S-adenosyl-L-methionine-binding positions include 33–35 (GGH), D52, F78, D99, and Q106.

This sequence belongs to the methyltransferase superfamily. RsmH family.

It localises to the cytoplasm. It catalyses the reaction cytidine(1402) in 16S rRNA + S-adenosyl-L-methionine = N(4)-methylcytidine(1402) in 16S rRNA + S-adenosyl-L-homocysteine + H(+). In terms of biological role, specifically methylates the N4 position of cytidine in position 1402 (C1402) of 16S rRNA. The sequence is that of Ribosomal RNA small subunit methyltransferase H from Phytoplasma australiense.